The chain runs to 420 residues: Putative competence-damage inducible protein (420 aa).

The protein belongs to the CinA family.

This Halalkalibacterium halodurans (strain ATCC BAA-125 / DSM 18197 / FERM 7344 / JCM 9153 / C-125) (Bacillus halodurans) protein is Putative competence-damage inducible protein.